Consider the following 371-residue polypeptide: Histidinol-phosphate aminotransferase (371 aa).

K221 bears the N6-(pyridoxal phosphate)lysine mark.

This sequence belongs to the class-II pyridoxal-phosphate-dependent aminotransferase family. Histidinol-phosphate aminotransferase subfamily. As to quaternary structure, homodimer. Pyridoxal 5'-phosphate serves as cofactor.

The catalysed reaction is L-histidinol phosphate + 2-oxoglutarate = 3-(imidazol-4-yl)-2-oxopropyl phosphate + L-glutamate. It participates in amino-acid biosynthesis; L-histidine biosynthesis; L-histidine from 5-phospho-alpha-D-ribose 1-diphosphate: step 7/9. This Pseudoalteromonas atlantica (strain T6c / ATCC BAA-1087) protein is Histidinol-phosphate aminotransferase.